A 168-amino-acid chain; its full sequence is Photosystem I assembly protein Ycf3 (168 aa).

TPR repeat units follow at residues 35-68 (AFTYYRDGMSAQSEGNYAEALQNYYEAMRLEIDP), 72-105 (SYILYNIGLIHTSNGEHTKALEYYFRALERNPFL), and 120-153 (GEQAIQQGDSEIAEAWFDQAAEYWKQAIALTPGN).

It belongs to the Ycf3 family.

It localises to the plastid. Its subcellular location is the chloroplast thylakoid membrane. In terms of biological role, essential for the assembly of the photosystem I (PSI) complex. May act as a chaperone-like factor to guide the assembly of the PSI subunits. This chain is Photosystem I assembly protein Ycf3, found in Solanum tuberosum (Potato).